Consider the following 380-residue polypeptide: Mitogen-activated protein kinase 3 (380 aa).

N-acetylalanine is present on alanine 2. One can recognise a Protein kinase domain in the interval 43–331; sequence YTQLQYIGEG…VEEALAHPYL (289 aa). Residues 49-57 and lysine 72 each bind ATP; that span reads IGEGAYGMV. Aspartate 167 functions as the Proton acceptor in the catalytic mechanism. Threonine 199 carries the post-translational modification Phosphothreonine. Phosphothreonine; by MAP2K1 and MAP2K2 is present on threonine 203. Positions 203 to 205 match the TXY motif; sequence TEY. The residue at position 205 (tyrosine 205) is a Phosphotyrosine; by MAP2K1 and MAP2K2. The residue at position 208 (threonine 208) is a Phosphothreonine; by autocatalysis.

The protein belongs to the protein kinase superfamily. CMGC Ser/Thr protein kinase family. MAP kinase subfamily. As to quaternary structure, binds both upstream activators and downstream substrates in multimolecular complexes. Found in a complex with at least BRAF, HRAS, MAP2K1/MEK1, MAPK3 and RGS14. Interacts with TPR. Interacts with ADAM15, ARRB2, CANX, DAPK1 (via death domain), HSF4, IER3, MAP2K1/MEK1, NISCH, and SGK1. Interacts with MORG1. Interacts with PEA15. Interacts with isoform 1 of MKNK2 and this binding prevents from dephosphorylation and inactivation. Interacts with CDKN2AIP. Interacts with HSF1 (via D domain and preferentially with hyperphosphorylated form); this interaction occurs upon heat shock. Interacts with CAVIN4. Interacts with GIT1; this interaction is necessary for MAPK3 localization to focal adhesions. Interacts with ZNF263. Interacts with EBF4. Mg(2+) is required as a cofactor. Post-translationally, dually phosphorylated on Thr-203 and Tyr-205, which activates the enzyme. Ligand-activated ALK induces tyrosine phosphorylation. Dephosphorylated by PTPRJ at Tyr-205. Autophosphorylated on threonine and tyrosine residues in vitro. Phosphorylated upon FLT3 and KIT signaling. Ubiquitinated by TRIM15 via 'Lys-63'-linked ubiquitination; leading to activation. Deubiquitinated by CYLD.

Its subcellular location is the cytoplasm. The protein resides in the nucleus. The protein localises to the membrane. It is found in the caveola. It localises to the cell junction. Its subcellular location is the focal adhesion. It carries out the reaction L-seryl-[protein] + ATP = O-phospho-L-seryl-[protein] + ADP + H(+). It catalyses the reaction L-threonyl-[protein] + ATP = O-phospho-L-threonyl-[protein] + ADP + H(+). Phosphorylated by MAP2K1/MEK1 and MAP2K2/MEK2 on Thr-203 and Tyr-205 in response to external stimuli like insulin or NGF. Both phosphorylations are required for activity. This phosphorylation causes dramatic conformational changes, which enable full activation and interaction of MAPK1/ERK2 with its substrates. Dephosphorylated and inactivated by DUSP3, DUSP6 and DUSP9. Functionally, serine/threonine kinase which acts as an essential component of the MAP kinase signal transduction pathway. MAPK1/ERK2 and MAPK3/ERK1 are the 2 MAPKs which play an important role in the MAPK/ERK cascade. They participate also in a signaling cascade initiated by activated KIT and KITLG/SCF. Depending on the cellular context, the MAPK/ERK cascade mediates diverse biological functions such as cell growth, adhesion, survival and differentiation through the regulation of transcription, translation, cytoskeletal rearrangements. The MAPK/ERK cascade also plays a role in initiation and regulation of meiosis, mitosis, and postmitotic functions in differentiated cells by phosphorylating a number of transcription factors. About 160 substrates have already been discovered for ERKs. Many of these substrates are localized in the nucleus, and seem to participate in the regulation of transcription upon stimulation. However, other substrates are found in the cytosol as well as in other cellular organelles, and those are responsible for processes such as translation, mitosis and apoptosis. Moreover, the MAPK/ERK cascade is also involved in the regulation of the endosomal dynamics, including lysosome processing and endosome cycling through the perinuclear recycling compartment (PNRC); as well as in the fragmentation of the Golgi apparatus during mitosis. The substrates include transcription factors (such as ATF2, BCL6, ELK1, ERF, FOS, HSF4 or SPZ1), cytoskeletal elements (such as CANX, CTTN, GJA1, MAP2, MAPT, PXN, SORBS3 or STMN1), regulators of apoptosis (such as BAD, BTG2, CASP9, DAPK1, IER3, MCL1 or PPARG), regulators of translation (such as EIF4EBP1) and a variety of other signaling-related molecules (like ARHGEF2, DEPTOR, FRS2 or GRB10). Protein kinases (such as RAF1, RPS6KA1/RSK1, RPS6KA3/RSK2, RPS6KA2/RSK3, RPS6KA6/RSK4, SYK, MKNK1/MNK1, MKNK2/MNK2, RPS6KA5/MSK1, RPS6KA4/MSK2, MAPKAPK3 or MAPKAPK5) and phosphatases (such as DUSP1, DUSP4, DUSP6 or DUSP16) are other substrates which enable the propagation the MAPK/ERK signal to additional cytosolic and nuclear targets, thereby extending the specificity of the cascade. The chain is Mitogen-activated protein kinase 3 (Mapk3) from Mus musculus (Mouse).